Consider the following 428-residue polypeptide: MPRTYIDTLRDHEDGAKVVVYGWMQEARIMKNISFLMIRDNTGTIQATFKNDEATLDIIKRINRESIVRVDGSVNKKSISKAGIEISGTSISIVNEAEAPLPLPVVDPVQADLETRLNSRFMDLRKRNISAIFRIESALLWGIRQYLHSQKFIEVHTPKIVAAATEGGSDLFPVRYFEKDAYLNQSPQLYKEVLMSAGFDRVFEVGPAFRAEEHNTTRHLNEFTSIDIEMSFADHNDAMAMLENAIRSGIENAVRENAEDFESLGISISVPETPFPRITYEQCIDLLQKDGIDFTFGDDFSPDQLRTIGSRFSGFYFITEWPSSVRPFYTMPKSEDPRLTNSFDLQYREIEVTSGAQRVHDPKMLIQRFNEKKLDVKSFQFYVDAFKYGMPPHAGWGLGLERLTMILLGLNNIRETTLFPRDRTRIVP.

Position 166 (glutamate 166) interacts with L-aspartate. The tract at residues 188-191 is aspartate; the sequence is QLYK. Residue arginine 210 coordinates L-aspartate. ATP-binding positions include 210 to 212, 218 to 220, and glutamate 351; these read RAE and RHL. 2 residues coordinate Mg(2+): glutamate 351 and serine 354. L-aspartate contacts are provided by serine 354 and arginine 358. 399-402 contributes to the ATP binding site; it reads GLER.

Belongs to the class-II aminoacyl-tRNA synthetase family. Type 2 subfamily. In terms of assembly, homodimer. Mg(2+) serves as cofactor.

It is found in the cytoplasm. The catalysed reaction is tRNA(Asp) + L-aspartate + ATP = L-aspartyl-tRNA(Asp) + AMP + diphosphate. Its function is as follows. Catalyzes the attachment of L-aspartate to tRNA(Asp) in a two-step reaction: L-aspartate is first activated by ATP to form Asp-AMP and then transferred to the acceptor end of tRNA(Asp). The protein is Aspartate--tRNA(Asp) ligase of Thermoplasma acidophilum (strain ATCC 25905 / DSM 1728 / JCM 9062 / NBRC 15155 / AMRC-C165).